An 820-amino-acid chain; its full sequence is LPS-assembly protein LptD (820 aa).

Residues 1-27 are disordered; it reads MDLSSLPDPLRPTHSRLPARRRDRAEP. Positions 13–22 are enriched in basic residues; that stretch reads THSRLPARRR.

This sequence belongs to the LptD family. As to quaternary structure, component of the lipopolysaccharide transport and assembly complex. Interacts with LptE and LptA.

Its function is as follows. Together with LptE, is involved in the assembly of lipopolysaccharide (LPS) at the surface of the outer membrane. The sequence is that of LPS-assembly protein LptD from Paracidovorax citrulli (strain AAC00-1) (Acidovorax citrulli).